We begin with the raw amino-acid sequence, 35 residues long: Basic endochitinase CH1 (35 aa).

It belongs to the glycosyl hydrolase 19 family. Chitinase class I subfamily.

The catalysed reaction is Random endo-hydrolysis of N-acetyl-beta-D-glucosaminide (1-&gt;4)-beta-linkages in chitin and chitodextrins.. Defense against chitin-containing fungal pathogens. This is Basic endochitinase CH1 from Castanea sativa (Sweet chestnut).